A 154-amino-acid chain; its full sequence is Bacterial ferritin (154 aa).

In terms of domain architecture, Ferritin-like diiron spans 1–145 (MQGNQAVVDY…QQLRLIELIG (145 aa)). Residues Glu18, Glu51, His54, Glu93, Glu127, and His130 each coordinate Fe cation.

The protein belongs to the bacterioferritin family. Forms a bacterioferritin (BFR) complex with BfrB. Heterooligomer of 24 subunits, arranged as 12 dimers, that are packed together to form an approximately spherical molecule with a central cavity, in which large amounts of iron can be deposited.

The protein localises to the cytoplasm. It carries out the reaction 4 Fe(2+) + O2 + 4 H(+) = 4 Fe(3+) + 2 H2O. The enzyme catalyses Fe(2+)(in) = Fe(2+)(out). Its function is as follows. Iron-storage protein. Its ferroxidase center binds Fe(2+), oxidizes it using dioxygen to Fe(3+), and participates in the subsequent Fe(3+) oxide mineral core formation within the central cavity of the BFR protein shell. Plays a role in protection against iron-mediated oxidative stress. This is Bacterial ferritin from Neisseria gonorrhoeae.